Consider the following 326-residue polypeptide: ATP synthase gamma chain (326 aa).

Belongs to the ATPase gamma chain family. F-type ATPases have 2 components, CF(1) - the catalytic core - and CF(0) - the membrane proton channel. CF(1) has five subunits: alpha(3), beta(3), gamma(1), delta(1), epsilon(1). CF(0) has three main subunits: a, b and c.

It is found in the cell membrane. Produces ATP from ADP in the presence of a proton gradient across the membrane. The gamma chain is believed to be important in regulating ATPase activity and the flow of protons through the CF(0) complex. The protein is ATP synthase gamma chain of Rhodococcus jostii (strain RHA1).